A 793-amino-acid chain; its full sequence is Probable serine/threonine-protein kinase fnkA (793 aa).

The region spanning 11-358 (WEILSQLGTG…IINLISHNFI (348 aa)) is the Protein kinase domain. ATP-binding positions include 17–25 (LGTGAFGRV) and Lys-46. Catalysis depends on Asp-138, which acts as the Proton acceptor. 5 FNIP repeats span residues 403 to 444 (FNQT…FGAR), 470 to 514 (YNQP…ILGD), 515 to 557 (YDQK…LGYR), 558 to 601 (FNKA…LGYC), and 691 to 733 (FIRP…LGSR).

Belongs to the protein kinase superfamily. STE Ser/Thr protein kinase family. It depends on Mg(2+) as a cofactor.

It carries out the reaction L-seryl-[protein] + ATP = O-phospho-L-seryl-[protein] + ADP + H(+). It catalyses the reaction L-threonyl-[protein] + ATP = O-phospho-L-threonyl-[protein] + ADP + H(+). The polypeptide is Probable serine/threonine-protein kinase fnkA (Dictyostelium discoideum (Social amoeba)).